A 244-amino-acid chain; its full sequence is Small ribosomal subunit protein uS2 (244 aa).

It belongs to the universal ribosomal protein uS2 family.

The chain is Small ribosomal subunit protein uS2 from Buchnera aphidicola subsp. Acyrthosiphon pisum (strain 5A).